The sequence spans 234 residues: 2-C-methyl-D-erythritol 4-phosphate cytidylyltransferase (234 aa).

It belongs to the IspD/TarI cytidylyltransferase family. IspD subfamily.

The catalysed reaction is 2-C-methyl-D-erythritol 4-phosphate + CTP + H(+) = 4-CDP-2-C-methyl-D-erythritol + diphosphate. It functions in the pathway isoprenoid biosynthesis; isopentenyl diphosphate biosynthesis via DXP pathway; isopentenyl diphosphate from 1-deoxy-D-xylulose 5-phosphate: step 2/6. Functionally, catalyzes the formation of 4-diphosphocytidyl-2-C-methyl-D-erythritol from CTP and 2-C-methyl-D-erythritol 4-phosphate (MEP). The polypeptide is 2-C-methyl-D-erythritol 4-phosphate cytidylyltransferase (Desulforamulus reducens (strain ATCC BAA-1160 / DSM 100696 / MI-1) (Desulfotomaculum reducens)).